The chain runs to 388 residues: Acyl-[acyl-carrier-protein] dehydrogenase MbtN (388 aa).

It belongs to the acyl-CoA dehydrogenase family. It depends on FAD as a cofactor.

Its pathway is siderophore biosynthesis; mycobactin biosynthesis. Its function is as follows. Catalyzes the dehydrogenation at the alpha-beta position of ACP-bound acyl chains. This results in the introduction of a double bond in the lipidic chain, which is further transferred to the epsilon-amino group of lysine residue in the mycobactin core by MbtK. This chain is Acyl-[acyl-carrier-protein] dehydrogenase MbtN (mbtN), found in Mycolicibacterium paratuberculosis (strain ATCC BAA-968 / K-10) (Mycobacterium paratuberculosis).